A 154-amino-acid chain; its full sequence is Large ribosomal subunit protein uL13 (154 aa).

The interval 129–154 (SQHPHEAQQPEALDVGTLNRKNKRIA) is disordered.

Belongs to the universal ribosomal protein uL13 family. As to quaternary structure, part of the 50S ribosomal subunit.

Functionally, this protein is one of the early assembly proteins of the 50S ribosomal subunit, although it is not seen to bind rRNA by itself. It is important during the early stages of 50S assembly. This Bartonella bacilliformis (strain ATCC 35685 / KC583 / Herrer 020/F12,63) protein is Large ribosomal subunit protein uL13.